A 338-amino-acid polypeptide reads, in one-letter code: Cytoskeleton protein RodZ (338 aa).

Residues 1–111 (MNTEASQDQT…LGKKHKKRDG (111 aa)) lie on the Cytoplasmic side of the membrane. The HTH cro/C1-type domain occupies 19 to 79 (LRQAREALGL…KLVHLPEDEL (61 aa)). The H-T-H motif DNA-binding region spans 30–49 (QQMVAERLCLKVSTIRDIEE). The chain crosses the membrane as a helical; Signal-anchor for type II membrane protein span at residues 112-132 (WLMSFTWLIVLVVLGLTGAWW). Residues 133 to 338 (WQNHQAQQAE…RVARLTVGVE (206 aa)) lie on the Periplasmic side of the membrane. 2 stretches are compositionally biased toward polar residues: residues 151 to 163 (SAQL…QSVP) and 180 to 195 (PVAN…NGTV). Positions 151–253 (SAQLSQNGGQ…LPTADAGVTG (103 aa)) are disordered. The segment covering 196–209 (PATSSAAPADTANN) has biased composition (low complexity). Polar residues predominate over residues 210-241 (GVNTTAPQGTTSAESAVVSPSQAPLPSVSTAQ).

This sequence belongs to the RodZ family.

It is found in the cell inner membrane. In terms of biological role, cytoskeletal protein that is involved in cell-shape control through regulation of the length of the long axis. The polypeptide is Cytoskeleton protein RodZ (Yersinia enterocolitica serotype O:8 / biotype 1B (strain NCTC 13174 / 8081)).